The following is a 348-amino-acid chain: NADH-quinone oxidoreductase subunit H (348 aa).

The next 8 helical transmembrane spans lie at 21 to 41, 87 to 107, 120 to 140, 166 to 186, 195 to 215, 258 to 278, 288 to 308, and 325 to 345; these read IAGI…VIYV, GIFL…WAVI, VGLL…VMAG, IGFI…SEIV, GIVN…LFFI, NILL…LPPI, GFLW…WIWA, and VFLP…MATG.

Belongs to the complex I subunit 1 family. In terms of assembly, NDH-1 is composed of 14 different subunits. Subunits NuoA, H, J, K, L, M, N constitute the membrane sector of the complex.

Its subcellular location is the cell inner membrane. The catalysed reaction is a quinone + NADH + 5 H(+)(in) = a quinol + NAD(+) + 4 H(+)(out). Its function is as follows. NDH-1 shuttles electrons from NADH, via FMN and iron-sulfur (Fe-S) centers, to quinones in the respiratory chain. The immediate electron acceptor for the enzyme in this species is believed to be ubiquinone. Couples the redox reaction to proton translocation (for every two electrons transferred, four hydrogen ions are translocated across the cytoplasmic membrane), and thus conserves the redox energy in a proton gradient. This subunit may bind ubiquinone. This is NADH-quinone oxidoreductase subunit H from Erythrobacter litoralis (strain HTCC2594).